The primary structure comprises 465 residues: Uronate isomerase (465 aa).

The protein belongs to the metallo-dependent hydrolases superfamily. Uronate isomerase family.

It catalyses the reaction D-glucuronate = D-fructuronate. The catalysed reaction is aldehydo-D-galacturonate = keto-D-tagaturonate. The protein operates within carbohydrate metabolism; pentose and glucuronate interconversion. The protein is Uronate isomerase of Streptococcus equi subsp. zooepidemicus (strain MGCS10565).